The sequence spans 1838 residues: MDVHTRWKARSALRPGAPLLPPLLLLLLWAPPPSRAAQPADLLKVLDFHNLPDGITKTTGFCATRRSSKGPDVAYRVTKDAQLSAPTKQLYPASAFPEDFSILTTVKAKKGSQAFLVSIYNEQGIQQIGLELGRSPVFLYEDHTGKPGPEDYPLFRGINLSDGKWHRIALSVHKKNVTLILDCKKKTTKFLDRSDHPMIDINGIIVFGTRILDEEVFEGDIQQLLFVSDHRAAYDYCEHYSPDCDTAVPDTPQSQDPNPDEYYTEGDGEGETYYYEYPYYEDPEDLGKEPTPSKKPVEAAKETTEVPEELTPTPTEAAPMPETSEGAGKEEDVGIGDYDYVPSEDYYTPSPYDDLTYGEGEENPDQPTDPGAGAEIPTSTADTSNSSNPAPPPGEGADDLEGEFTEETIRNLDENYYDPYYDPTSSPSEIGPGMPANQDTIYEGIGGPRGEKGQKGEPAIIEPGMLIEGPPGPEGPAGLPGPPGTMGPTGQVGDPGERGPPGRPGLPGADGLPGPPGTMLMLPFRFGGGGDAGSKGPMVSAQESQAQAILQQARLALRGPAGPMGLTGRPGPVGPPGSGGLKGEPGDVGPQGPRGVQGPPGPAGKPGRRGRAGSDGARGMPGQTGPKGDRGFDGLAGLPGEKGHRGDPGPSGPPGPPGDDGERGDDGEVGPRGLPGEPGPRGLLGPKGPPGPPGPPGVTGMDGQPGPKGNVGPQGEPGPPGQQGNPGAQGLPGPQGAIGPPGEKGPLGKPGLPGMPGADGPPGHPGKEGPPGEKGGQGPPGPQGPIGYPGPRGVKGADGIRGLKGTKGEKGEDGFPGFKGDMGIKGDRGEIGPPGPRGEDGPEGPKGRGGPNGDPGPLGPPGEKGKLGVPGLPGYPGRQGPKGSIGFPGFPGANGEKGGRGTPGKPGPRGQRGPTGPRGERGPRGITGKPGPKGNSGGDGPAGPPGERGPNGPQGPTGFPGPKGPPGPPGKDGLPGHPGQRGETGFQGKTGPPGPPGVVGPQGPTGETGPMGERGHPGPPGPPGEQGLPGLAGKEGTKGDPGPAGLPGKDGPPGLRGFPGDRGLPGPVGALGLKGNEGPPGPPGPAGSPGERGPAGAAGPIGIPGRPGPQGPPGPAGEKGAPGEKGPQGPAGRDGLQGPVGLPGPAGPVGPPGEDGDKGEIGEPGQKGSKGDKGEQGPPGPTGPQGPIGQPGPSGADGEPGPRGQQGLFGQKGDEGPRGFPGPPGPVGLQGLPGPPGEKGETGDVGQMGPPGPPGPRGPSGAPGADGPQGPPGGIGNPGAVGEKGEPGEAGEPGLPGEGGPPGPKGERGEKGESGPSGAAGPPGPKGPPGDDGPKGSPGPVGFPGDPGPPGEPGPAGQDGPPGDKGDDGEPGQTGSPGPTGEPGPSGPPGKRGPPGPAGPEGRQGEKGAKGEAGLEGPPGKTGPIGPQGAPGKPGPDGLRGIPGPVGEQGLPGSPGPDGPPGPMGPPGLPGLKGDSGPKGEKGHPGLIGLIGPPGEQGEKGDRGLPGPQGSSGPKGEQGITGPSGPIGPPGPPGLPGPPGPKGAKGSSGPTGPKGEAGHPGPPGPPGPPGEVIQPLPIQASRTRRNIDASQLLDDGNGENYVDYADGMEEIFGSLNSLKLEIEQMKRPLGTQQNPARTCKDLQLCHPDFPDGEYWVDPNQGCSRDSFKVYCNFTAGGSTCVFPDKKSEGARITSWPKENPGSWFSEFKRGKLLSYVDAEGNPVGVVQMTFLRLLSASAHQNVTYHCYQSVAWQDAATGSYDKALRFLGSNDEEMSYDNNPYIRALVDGCATKKGYQKTVLEIDTPKVEQVPIVDIMFNDFGEASQKFGFEVGPACFMG.

A signal peptide spans 1–37; the sequence is MDVHTRWKARSALRPGAPLLPPLLLLLLWAPPPSRAA. One can recognise a Laminin G-like domain in the interval 72 to 244; sequence DVAYRVTKDA…DYCEHYSPDC (173 aa). The tract at residues 231–443 is nonhelical region; the sequence is RAAYDYCEHY…MPANQDTIYE (213 aa). Sulfotyrosine occurs at positions 234, 236, 240, 262, and 263. Disordered regions lie at residues 242 to 269, 281 to 457, 470 to 520, 526 to 545, and 559 to 1574; these read PDCD…GDGE, EDPE…QKGE, PPGP…GTML, FGGG…QESQ, and GPAG…EVIQ. Acidic residues predominate over residues 258-269; sequence NPDEYYTEGDGE. The segment covering 285–304 has biased composition (basic and acidic residues); that stretch reads DLGKEPTPSKKPVEAAKETT. Residues 309–323 show a composition bias toward low complexity; sequence ELTPTPTEAAPMPET. Sulfotyrosine occurs at positions 338, 340, 346, and 347. Residues 377–388 show a composition bias toward polar residues; sequence PTSTADTSNSSN. Residues 396-406 are compositionally biased toward acidic residues; that stretch reads GADDLEGEFTE. Residues Y416, Y417, Y420, and Y421 each carry the sulfotyrosine modification. Over residues 417 to 428 the composition is skewed to low complexity; the sequence is YDPYYDPTSSPS. The tract at residues 444–558 is interrupted collagenous region; it reads GIGGPRGEKG…ILQQARLALR (115 aa). The segment covering 470-485 has biased composition (pro residues); that stretch reads PPGPEGPAGLPGPPGT. Over residues 506–520 the composition is skewed to low complexity; it reads LPGADGLPGPPGTML. The interval 559–1570 is triple-helical region; that stretch reads GPAGPMGLTG…GPPGPPGPPG (1012 aa). 2 positions are modified to hydroxyproline: P570 and P576. The segment covering 587 to 597 has biased composition (low complexity); sequence DVGPQGPRGVQ. P621 bears the Hydroxyproline mark. The residue at position 627 (K627) is a 5-hydroxylysine. Residue P639 is modified to Hydroxyproline. At K642 the chain carries 5-hydroxylysine. 5 positions are modified to hydroxyproline: P648, P654, P657, P675, and P678. Residues 671–686 are compositionally biased toward low complexity; it reads PRGLPGEPGPRGLLGP. K687 carries the 5-hydroxylysine modification. Residues 687-696 are compositionally biased toward pro residues; sequence KGPPGPPGPP. Residues P690, P696, and P705 each carry the hydroxyproline modification. At K708 the chain carries 5-hydroxylysine. Hydroxyproline occurs at positions 717, 720, 726, and 732. The span at 722-741 shows a compositional bias: low complexity; that stretch reads QQGNPGAQGLPGPQGAIGPP. The residue at position 744 (K744) is a 5-hydroxylysine. A compositionally biased stretch (low complexity) spans 747 to 756; the sequence is LGKPGLPGMP. Hydroxyproline occurs at positions 750, 756, 762, 765, and 771. K774 is subject to 5-hydroxylysine. Residues P780 and P789 each carry the hydroxyproline modification. 5-hydroxylysine is present on residues K795, K804, K807, and K810. P816 carries the hydroxyproline modification. Position 819 is a 5-hydroxylysine (K819). P834 bears the Hydroxyproline mark. A compositionally biased stretch (basic and acidic residues) spans 837–846; the sequence is RGEDGPEGPK. K846 is subject to 5-hydroxylysine. At P861 the chain carries Hydroxyproline. Residue K864 is modified to 5-hydroxylysine. The span at 867-876 shows a compositional bias: low complexity; that stretch reads LGVPGLPGYP. Hydroxyproline is present on residues P870, P873, and P876. 5-hydroxylysine is present on K882. Residues P888 and P891 each carry the hydroxyproline modification. Position 897 is a 5-hydroxylysine (K897). 2 positions are modified to hydroxyproline: P903 and P906. The segment covering 908-917 has biased composition (low complexity); the sequence is PRGQRGPTGP. Residues P930 and P945 each carry the hydroxyproline modification. 2 stretches are compositionally biased toward low complexity: residues 971 to 990 and 999 to 1011; these read KDGL…QGKT and VGPQ…TGPM. P1017, P1020, P1023, and P1029 each carry hydroxyproline. Positions 1088–1104 are enriched in low complexity; that stretch reads SPGERGPAGAAGPIGIP. A compositionally biased stretch (pro residues) spans 1106–1115; that stretch reads RPGPQGPPGP. The span at 1116–1140 shows a compositional bias: low complexity; that stretch reads AGEKGAPGEKGPQGPAGRDGLQGPV. Residues P1221 and P1224 each carry the hydroxyproline modification. The segment covering 1259–1268 has biased composition (low complexity); the sequence is PSGAPGADGP. 2 stretches are compositionally biased toward pro residues: residues 1380–1398 and 1454–1469; these read TGEP…PGPA and SPGP…PPGL. A hydroxyproline mark is found at P1467 and P1470. Residues 1485–1494 are compositionally biased toward low complexity; the sequence is PGLIGLIGPP. Residues 1526–1541 are compositionally biased toward pro residues; that stretch reads PIGPPGPPGLPGPPGP. Positions 1542–1554 are enriched in low complexity; the sequence is KGAKGSSGPTGPK. Residues 1560–1569 are compositionally biased toward pro residues; sequence PGPPGPPGPP. The tract at residues 1571–1605 is nonhelical region; the sequence is EVIQPLPIQASRTRRNIDASQLLDDGNGENYVDYA. Residues Y1601 and Y1604 each carry the sulfotyrosine modification. Residues 1606-1838 constitute a propeptide, C-terminal propeptide; sequence DGMEEIFGSL…FEVGPACFMG (233 aa). Residues 1609 to 1837 enclose the Fibrillar collagen NC1 domain; it reads EEIFGSLNSL…GFEVGPACFM (229 aa). Intrachain disulfides connect C1639-C1671, C1680-C1835, and C1746-C1789. D1657, N1659, Q1660, C1662, and D1665 together coordinate Ca(2+).

It belongs to the fibrillar collagen family. Trimers of two alpha 1(V) and one alpha 2(V) chains in most tissues and trimers of one alpha 1(V), one alpha 2(V), and one alpha 3(V) chains in placenta. Interacts with CSPG4. In terms of processing, prolines at the third position of the tripeptide repeating unit (G-X-Y) are hydroxylated in some or all of the chains. Post-translationally, sulfated on 40% of tyrosines.

The protein localises to the secreted. The protein resides in the extracellular space. It localises to the extracellular matrix. Type V collagen is a member of group I collagen (fibrillar forming collagen). It is a minor connective tissue component of nearly ubiquitous distribution. Type V collagen binds to DNA, heparan sulfate, thrombospondin, heparin, and insulin. In Homo sapiens (Human), this protein is Collagen alpha-1(V) chain (COL5A1).